The following is a 345-amino-acid chain: Hemin transport protein HmuS (345 aa).

It to Y.enterocolitica HemS.

Its function is as follows. Part of the binding-protein-dependent transport system for hemin. The chain is Hemin transport protein HmuS (hmuS) from Yersinia pestis.